Here is a 210-residue protein sequence, read N- to C-terminus: Thymidylate kinase (210 aa).

Gly9 to Ser16 lines the ATP pocket.

Belongs to the thymidylate kinase family.

The catalysed reaction is dTMP + ATP = dTDP + ADP. Its function is as follows. Phosphorylation of dTMP to form dTDP in both de novo and salvage pathways of dTTP synthesis. This chain is Thymidylate kinase, found in Aliivibrio fischeri (strain MJ11) (Vibrio fischeri).